Reading from the N-terminus, the 130-residue chain is HTH-type transcriptional repressor YtrA (130 aa).

The 69-residue stretch at threonine 10–asparagine 78 folds into the HTH gntR-type domain. The H-T-H motif DNA-binding region spans valine 38 to lysine 57.

Negatively regulates ABC transporter complex ytrBCDEF that plays a role in acetoin utilization during stationary phase and sporulation. The protein is HTH-type transcriptional repressor YtrA (ytrA) of Bacillus subtilis (strain 168).